Consider the following 385-residue polypeptide: Deoxyguanosinetriphosphate triphosphohydrolase-like protein (385 aa).

In terms of domain architecture, HD spans 75-204 (RLTHSLEVAQ…INFADEIAYN (130 aa)).

Belongs to the dGTPase family. Type 2 subfamily.

In Geobacter sulfurreducens (strain ATCC 51573 / DSM 12127 / PCA), this protein is Deoxyguanosinetriphosphate triphosphohydrolase-like protein.